The sequence spans 262 residues: Insulin-like growth factor-binding protein 1 (262 aa).

The first 25 residues, 1-25 (MPEVPAVRAWPLLLSLALQLGAAAG), serve as a signal peptide directing secretion. Residues 28 to 108 (QPLHCAPCSA…TRGQGACMPA (81 aa)) enclose the IGFBP N-terminal domain. Disulfide bonds link Cys-32–Cys-59, Cys-35–Cys-61, Cys-43–Cys-62, Cys-50–Cys-65, Cys-72–Cys-85, and Cys-79–Cys-105. Positions 101–133 (GQGACMPAPSAEATETKDPAAPETTSPESTEMT) are disordered. The segment covering 121–131 (APETTSPESTE) has biased composition (low complexity). 3 positions are modified to phosphoserine: Ser-126, Ser-129, and Ser-147. Tyr-161 is subject to Phosphotyrosine. The region spanning 176 to 254 (KEPCQRELYK…STAVRGDPKC (79 aa)) is the Thyroglobulin type-1 domain. 3 disulfide bridges follow: Cys-179-Cys-209, Cys-220-Cys-231, and Cys-233-Cys-254. Phosphoserine is present on Ser-245. A Cell attachment site motif is present at residues 249-251 (RGD).

As to quaternary structure, binds equally well IGF1 and IGF2. Interacts with integrin ITGA5:ITGB1. Interacts with VHL; this interaction inhibits HIF1A degradation.

Its subcellular location is the secreted. Functionally, multifunctional protein that plays a critical role in regulating the availability of IGFs such as IGF1 and IGF2 to their receptors and thereby regulates IGF-mediated cellular processes including cell migration, proliferation, differentiation or apoptosis in a cell-type specific manner. Also plays a positive role in cell migration by interacting with integrin ITGA5:ITGB1 through its RGD motif. Mechanistically, binding to integrins leads to activation of focal adhesion kinase/PTK2 and stimulation of the mitogen-activated protein kinase (MAPK) pathway. Regulates cardiomyocyte apoptosis by suppressing HIF-1alpha/HIF1A degradation through ubiquitination. This Sus scrofa (Pig) protein is Insulin-like growth factor-binding protein 1 (IGFBP1).